Reading from the N-terminus, the 381-residue chain is Succinyl-diaminopimelate desuccinylase (381 aa).

Residue histidine 72 coordinates Zn(2+). Aspartate 74 is an active-site residue. Residue aspartate 105 coordinates Zn(2+). Catalysis depends on glutamate 139, which acts as the Proton acceptor. Residues glutamate 140, glutamate 168, and histidine 354 each contribute to the Zn(2+) site.

This sequence belongs to the peptidase M20A family. DapE subfamily. Homodimer. Zn(2+) serves as cofactor. It depends on Co(2+) as a cofactor.

It carries out the reaction N-succinyl-(2S,6S)-2,6-diaminopimelate + H2O = (2S,6S)-2,6-diaminopimelate + succinate. The protein operates within amino-acid biosynthesis; L-lysine biosynthesis via DAP pathway; LL-2,6-diaminopimelate from (S)-tetrahydrodipicolinate (succinylase route): step 3/3. Catalyzes the hydrolysis of N-succinyl-L,L-diaminopimelic acid (SDAP), forming succinate and LL-2,6-diaminopimelate (DAP), an intermediate involved in the bacterial biosynthesis of lysine and meso-diaminopimelic acid, an essential component of bacterial cell walls. The sequence is that of Succinyl-diaminopimelate desuccinylase from Shewanella sp. (strain MR-7).